Reading from the N-terminus, the 393-residue chain is 1-deoxy-D-xylulose 5-phosphate reductoisomerase (393 aa).

Residues Thr-16, Gly-17, Ser-18, Ile-19, Ala-42, Arg-43, Asn-44, and Asn-127 each coordinate NADPH. Lys-128 provides a ligand contact to 1-deoxy-D-xylulose 5-phosphate. NADPH is bound at residue Glu-129. Asp-153 provides a ligand contact to Mn(2+). Residues Ser-154, Glu-155, Ser-179, and His-202 each coordinate 1-deoxy-D-xylulose 5-phosphate. Glu-155 is a Mn(2+) binding site. Gly-208 provides a ligand contact to NADPH. The 1-deoxy-D-xylulose 5-phosphate site is built by Ser-215, Asn-220, Lys-221, and Glu-224. Position 224 (Glu-224) interacts with Mn(2+).

Belongs to the DXR family. Mg(2+) serves as cofactor. The cofactor is Mn(2+).

It catalyses the reaction 2-C-methyl-D-erythritol 4-phosphate + NADP(+) = 1-deoxy-D-xylulose 5-phosphate + NADPH + H(+). The protein operates within isoprenoid biosynthesis; isopentenyl diphosphate biosynthesis via DXP pathway; isopentenyl diphosphate from 1-deoxy-D-xylulose 5-phosphate: step 1/6. Functionally, catalyzes the NADPH-dependent rearrangement and reduction of 1-deoxy-D-xylulose-5-phosphate (DXP) to 2-C-methyl-D-erythritol 4-phosphate (MEP). The sequence is that of 1-deoxy-D-xylulose 5-phosphate reductoisomerase from Jannaschia sp. (strain CCS1).